The chain runs to 121 residues: Large ribosomal subunit protein eL18 (121 aa).

Belongs to the eukaryotic ribosomal protein eL18 family.

The chain is Large ribosomal subunit protein eL18 from Methanothermobacter thermautotrophicus (strain ATCC 29096 / DSM 1053 / JCM 10044 / NBRC 100330 / Delta H) (Methanobacterium thermoautotrophicum).